A 2603-amino-acid chain; its full sequence is Squalestatin tetraketide synthase (2603 aa).

One can recognise a Ketosynthase family 3 (KS3) domain in the interval 29–455 (TIPIAIIGMS…GANAHVILES (427 aa)). Catalysis depends on for beta-ketoacyl synthase activity residues Cys-202, His-337, and His-377. The interval 463–512 (IANGSGRSNGTGNGHNGANGTTNGHNGTNGTTNGHFDATQATNGHYGTDE) is disordered. Over residues 469–479 (RSNGTGNGHNG) the composition is skewed to gly residues. The segment covering 480–497 (ANGTTNGHNGTNGTTNGH) has biased composition (low complexity). The malonyl-CoA:ACP transacylase (MAT) domain stretch occupies residues 608–931 (VFTGQGAQWF…PYISCLLRGQ (324 aa)). Positions 1000–1138 (HDLLGSLIVG…GRITIEFDTS (139 aa)) are N-terminal hotdog fold. In terms of domain architecture, PKS/mFAS DH spans 1000-1314 (HDLLGSLIVG…NQSVGQMAPQ (315 aa)). Residues 1000–1314 (HDLLGSLIVG…NQSVGQMAPQ (315 aa)) form a dehydratase (DH) domain region. His-1032 (proton acceptor; for dehydratase activity) is an active-site residue. The tract at residues 1157 to 1314 (LMRSVDPSNL…NQSVGQMAPQ (158 aa)) is C-terminal hotdog fold. Asp-1223 acts as the Proton donor; for dehydratase activity in catalysis. A methyltransferase (CMet) domain region spans residues 1465–1665 (LYRYYTDAIK…GLDIELRDCD (201 aa)). The segment at 1892-2205 (GLIDTLQFSK…AGKHMGKIVI (314 aa)) is enoyl reductase (ER) (ER) domain. The tract at residues 2228-2406 (ASYLIVGGLG…AVSIDLGMVQ (179 aa)) is ketoreductase (KR) domain. In terms of domain architecture, Carrier spans 2516–2593 (EAIDVVGRAI…ALATTVATKS (78 aa)). An O-(pantetheine 4'-phosphoryl)serine modification is found at Ser-2553.

It participates in secondary metabolite biosynthesis. Its function is as follows. Highly reducing polyketide synthase (HR-PKS); part of the gene cluster that mediates the biosynthesis of squalestatin S1 (SQS1, also known as zaragozic acid A), a lead compound for the treatment of hyper-cholesterolemia by targeting squalene synthase (SS). Pks1 is responsible for the biosynthesis of the tetraketide sidechain of SQS1. The biosynthesis must involve 3 rounds of chain extension. After the first and second rounds methyl-transfer occurs, and in all rounds of extension the ketoreductase and dehydratase are active. The enoyl reductase and C-MeT are not active in the final round of extension. The sequence is that of Squalestatin tetraketide synthase from Phoma sp. (strain C2932).